A 339-amino-acid polypeptide reads, in one-letter code: Uracil nucleotide/cysteinyl leukotriene receptor (339 aa).

Residues 1 to 36 (MDGLETALPSLTDNASLAYSEQCGQETPLENMLFAC) lie on the Extracellular side of the membrane. N-linked (GlcNAc...) asparagine glycosylation occurs at Asn14. A helical membrane pass occupies residues 37 to 57 (FYLLDFILAFVGNALALWLFI). Topologically, residues 58 to 64 (WDHKSGT) are cytoplasmic. The helical transmembrane segment at 65–85 (PANVFLMHLAVADLSCVLVLP) threads the bilayer. The Extracellular portion of the chain corresponds to 86 to 105 (TRLVYHFSGNHWPFGEIPCR). An intrachain disulfide couples Cys104 to Cys181. A helical membrane pass occupies residues 106–126 (LTGFLFYLNMYASIYFLTCIS). The Cytoplasmic portion of the chain corresponds to 127–147 (ADRFLAIVHPVKSLKLRRPLY). A helical membrane pass occupies residues 148 to 168 (AHLACAFLWIVVAVAMAPLLV). At 169-195 (SPQTVQTNHTVVCLQLYREKASHHALA) the chain is on the extracellular side. An N-linked (GlcNAc...) asparagine glycan is attached at Asn176. A helical transmembrane segment spans residues 196 to 216 (SLAVAFTFPFITTVTCYLLII). Residues 217–232 (RSLRQGPRIEKHLKNK) are Cytoplasmic-facing. A helical membrane pass occupies residues 233-253 (AVRMIAMVLAIFLICFVPYHI). Topologically, residues 254 to 280 (HRSVYVLHYRGGGTSCSAQRALALGNR) are extracellular. A helical transmembrane segment spans residues 281-301 (ITSCLTSLNGALDPVMYFFVA). The Cytoplasmic portion of the chain corresponds to 302–339 (EKFRHALCNLLCSKRLTGPPPSFEGKTNESSLSARSEL).

The protein belongs to the G-protein coupled receptor 1 family. In terms of tissue distribution, expressed in brain, kidney, and heart. Highest level in brain.

The protein resides in the cell membrane. Its function is as follows. Dual specificity receptor for uracil nucleotides and cysteinyl leukotrienes (CysLTs). Signals through G(i) and inhibition of adenylyl cyclase. May mediate brain damage by nucleotides and CysLTs following ischemia. This chain is Uracil nucleotide/cysteinyl leukotriene receptor, found in Rattus norvegicus (Rat).